The following is a 61-amino-acid chain: Small ribosomal subunit protein uS14 (61 aa).

Residues Cys24, Cys27, Cys40, and Cys43 each coordinate Zn(2+).

Belongs to the universal ribosomal protein uS14 family. Zinc-binding uS14 subfamily. In terms of assembly, part of the 30S ribosomal subunit. Contacts proteins S3 and S10. Zn(2+) is required as a cofactor.

Binds 16S rRNA, required for the assembly of 30S particles and may also be responsible for determining the conformation of the 16S rRNA at the A site. The chain is Small ribosomal subunit protein uS14 from Mesomycoplasma hyopneumoniae (strain 232) (Mycoplasma hyopneumoniae).